A 209-amino-acid polypeptide reads, in one-letter code: PRA1 family protein B1 (209 aa).

N-acetylalanine is present on Ala-2. 5 helical membrane-spanning segments follow: residues Leu-73–Phe-93, His-95–Phe-115, Glu-133–Ser-153, Leu-154–Val-174, and Pro-185–Val-205.

Belongs to the PRA1 family. As to quaternary structure, can form homodimer. Interacts with PRA1B2, PRA1B3, PRA1B4, PRA1B5, PRA1B6 and PRA1E.

It localises to the endosome membrane. Its function is as follows. May be involved in both secretory and endocytic intracellular trafficking in the endosomal/prevacuolar compartments. In Arabidopsis thaliana (Mouse-ear cress), this protein is PRA1 family protein B1 (PRA1B1).